The primary structure comprises 137 residues: Large ribosomal subunit protein uL16 (137 aa).

Positions 1–22 (MLQPKRTKFRKVQKGRNRGLAH) are disordered.

It belongs to the universal ribosomal protein uL16 family. Part of the 50S ribosomal subunit.

Functionally, binds 23S rRNA and is also seen to make contacts with the A and possibly P site tRNAs. This chain is Large ribosomal subunit protein uL16, found in Chromohalobacter salexigens (strain ATCC BAA-138 / DSM 3043 / CIP 106854 / NCIMB 13768 / 1H11).